A 207-amino-acid chain; its full sequence is LPS-assembly lipoprotein LptE (207 aa).

The N-terminal stretch at 1-19 (MRHRILMLLLGLAVLVTAG) is a signal peptide. The N-palmitoyl cysteine moiety is linked to residue Cys20. The S-diacylglycerol cysteine moiety is linked to residue Cys20.

This sequence belongs to the LptE lipoprotein family. Component of the lipopolysaccharide transport and assembly complex. Interacts with LptD.

Its subcellular location is the cell outer membrane. Together with LptD, is involved in the assembly of lipopolysaccharide (LPS) at the surface of the outer membrane. Required for the proper assembly of LptD. Binds LPS and may serve as the LPS recognition site at the outer membrane. This chain is LPS-assembly lipoprotein LptE, found in Yersinia enterocolitica serotype O:8 / biotype 1B (strain NCTC 13174 / 8081).